The sequence spans 333 residues: Ribokinase (333 aa).

Substrate-binding positions include N10–D12, G38–N42, and E149. Residues N193 and T248–G253 each bind ATP. D277 and T279 together coordinate K(+). G282–D283 is an ATP binding site. Residue D283 coordinates substrate. The active-site Proton acceptor is the D283. K(+) contacts are provided by T313, R316, G318, and S322.

This sequence belongs to the carbohydrate kinase PfkB family. Ribokinase subfamily. As to quaternary structure, homodimer. Mg(2+) is required as a cofactor.

The protein localises to the cytoplasm. Its subcellular location is the nucleus. It carries out the reaction D-ribose + ATP = D-ribose 5-phosphate + ADP + H(+). Its pathway is carbohydrate metabolism; D-ribose degradation; D-ribose 5-phosphate from beta-D-ribopyranose: step 2/2. Activated by a monovalent cation that binds near, but not in, the active site. The most likely occupant of the site in vivo is potassium. Ion binding induces a conformational change that may alter substrate affinity. Catalyzes the phosphorylation of ribose at O-5 in a reaction requiring ATP and magnesium. The resulting D-ribose-5-phosphate can then be used either for sythesis of nucleotides, histidine, and tryptophan, or as a component of the pentose phosphate pathway. This is Ribokinase from Saccharomyces cerevisiae (strain ATCC 204508 / S288c) (Baker's yeast).